The chain runs to 328 residues: tRNA dimethylallyltransferase (328 aa).

23–30 (GPTASGKS) lines the ATP pocket. Position 25–30 (25–30 (TASGKS)) interacts with substrate. The segment at 48–51 (DSMQ) is interaction with substrate tRNA.

The protein belongs to the IPP transferase family. As to quaternary structure, monomer. It depends on Mg(2+) as a cofactor.

It carries out the reaction adenosine(37) in tRNA + dimethylallyl diphosphate = N(6)-dimethylallyladenosine(37) in tRNA + diphosphate. In terms of biological role, catalyzes the transfer of a dimethylallyl group onto the adenine at position 37 in tRNAs that read codons beginning with uridine, leading to the formation of N6-(dimethylallyl)adenosine (i(6)A). The protein is tRNA dimethylallyltransferase of Rhodopseudomonas palustris (strain BisA53).